The following is a 244-amino-acid chain: Maintenance of ploidy protein mob2 (244 aa).

Positions 14–45 (NRSKRHQNLSDASSSSGSFSKKSSTSQLVRTG) are disordered. Residues 23–39 (SDASSSSGSFSKKSSTS) are compositionally biased toward low complexity. Phosphoserine occurs at positions 46 and 48.

The protein belongs to the MOB1/phocein family. In terms of assembly, interacts with orb6.

The protein localises to the cytoplasm. It localises to the cell cortex. Required for coordinating polarized cell growth during interphase with the onset of mitosis. In Schizosaccharomyces pombe (strain 972 / ATCC 24843) (Fission yeast), this protein is Maintenance of ploidy protein mob2 (mob2).